Consider the following 157-residue polypeptide: Protein Smg homolog (157 aa).

The protein belongs to the Smg family.

This chain is Protein Smg homolog, found in Shewanella loihica (strain ATCC BAA-1088 / PV-4).